The primary structure comprises 508 residues: Pyruvate kinase 2 (508 aa).

R50 provides a ligand contact to substrate. 4 residues coordinate K(+): N52, S54, D85, and T86. 52-55 (NFSH) is a binding site for ATP. ATP is bound by residues R92 and K178. E243 contributes to the Mg(2+) binding site. 3 residues coordinate substrate: G266, D267, and T299. D267 contacts Mg(2+).

It belongs to the pyruvate kinase family. In terms of assembly, homotetramer. Mg(2+) serves as cofactor. It depends on K(+) as a cofactor.

It carries out the reaction pyruvate + ATP = phosphoenolpyruvate + ADP + H(+). It participates in carbohydrate degradation; glycolysis; pyruvate from D-glyceraldehyde 3-phosphate: step 5/5. The chain is Pyruvate kinase 2 (PYK2) from Candida glabrata (strain ATCC 2001 / BCRC 20586 / JCM 3761 / NBRC 0622 / NRRL Y-65 / CBS 138) (Yeast).